The chain runs to 599 residues: Elongation factor 4 (599 aa).

A tr-type G domain is found at 2 to 184 (NHIRNFSIIA…RLVRDIPAPE (183 aa)). GTP-binding positions include 14–19 (DHGKST) and 131–134 (NKID).

It belongs to the TRAFAC class translation factor GTPase superfamily. Classic translation factor GTPase family. LepA subfamily.

The protein localises to the cell inner membrane. It catalyses the reaction GTP + H2O = GDP + phosphate + H(+). Its function is as follows. Required for accurate and efficient protein synthesis under certain stress conditions. May act as a fidelity factor of the translation reaction, by catalyzing a one-codon backward translocation of tRNAs on improperly translocated ribosomes. Back-translocation proceeds from a post-translocation (POST) complex to a pre-translocation (PRE) complex, thus giving elongation factor G a second chance to translocate the tRNAs correctly. Binds to ribosomes in a GTP-dependent manner. This Yersinia pestis (strain Pestoides F) protein is Elongation factor 4.